The sequence spans 666 residues: Non-receptor tyrosine-protein kinase TNK1 (666 aa).

S96 bears the Phosphoserine mark. A Protein kinase domain is found at 116 to 383 (VRRGELLGSG…LEGLLQEAWL (268 aa)). ATP is bound by residues 122–130 (LGSGCFGVV) and K148. Residue D245 is the Proton acceptor of the active site. Position 255 is a phosphoserine (S255). Residues 381 to 441 (AWLSEGRCVR…PASAVTLADL (61 aa)) enclose the SH3 domain. The disordered stretch occupies residues 442–589 (GGSPVTHPAH…VPSGGPLSDP (148 aa)). Over residues 457 to 473 (HGEKCRGGTDGDREKAT) the composition is skewed to basic and acidic residues. At S498 the chain carries Phosphoserine. At T510 the chain carries Phosphothreonine. The residue at position 515 (S515) is a Phosphoserine. Pro residues predominate over residues 531-544 (DLPPRPPDLPPRPP). At S582 the chain carries Phosphoserine.

The protein belongs to the protein kinase superfamily. Tyr protein kinase family. As to quaternary structure, interacts with the SH3 domain of PLCG1 via its Pro-rich domain. Post-translationally, autophosphorylated on tyrosine residues. As to expression, expressed in whole embryo and all adult tissues examined including liver, kidney, heart, brain, skeletal muscle and intestine. Also detected in various myeloid- and lymphoid-derived cell lines.

It is found in the membrane. Its subcellular location is the cytoplasm. The catalysed reaction is L-tyrosyl-[protein] + ATP = O-phospho-L-tyrosyl-[protein] + ADP + H(+). Its function is as follows. May function in signaling pathways utilized broadly during fetal development and more selectively in adult tissues and in cells of the lymphohematopoietic system. Could specifically be involved in phospholipid signal transduction. Involved in negative regulation of cell growth. Has tumor suppressor properties. Plays a negative regulatory role in the Ras-MAPK pathway. The polypeptide is Non-receptor tyrosine-protein kinase TNK1 (Mus musculus (Mouse)).